Reading from the N-terminus, the 357-residue chain is Ribosomal RNA large subunit methyltransferase F (357 aa).

Positions 1-15 (MPKPPRSTQILSCNA) are enriched in polar residues. The interval 1–33 (MPKPPRSTQILSCNAPNGKPKTQHPSARAKVKR) is disordered.

The protein belongs to the methyltransferase superfamily. METTL16/RlmF family.

It is found in the cytoplasm. The catalysed reaction is adenosine(1618) in 23S rRNA + S-adenosyl-L-methionine = N(6)-methyladenosine(1618) in 23S rRNA + S-adenosyl-L-homocysteine + H(+). Its function is as follows. Specifically methylates the adenine in position 1618 of 23S rRNA. The sequence is that of Ribosomal RNA large subunit methyltransferase F from Shewanella putrefaciens (strain CN-32 / ATCC BAA-453).